The following is a 345-amino-acid chain: tRNA N6-adenosine threonylcarbamoyltransferase (345 aa).

Fe cation is bound by residues His115 and His119. Residues 137 to 141, Asp170, Gly183, Asp187, and Asn276 each bind substrate; that span reads LVSGG. Asp306 serves as a coordination point for Fe cation.

It belongs to the KAE1 / TsaD family. The cofactor is Fe(2+).

It localises to the cytoplasm. The enzyme catalyses L-threonylcarbamoyladenylate + adenosine(37) in tRNA = N(6)-L-threonylcarbamoyladenosine(37) in tRNA + AMP + H(+). In terms of biological role, required for the formation of a threonylcarbamoyl group on adenosine at position 37 (t(6)A37) in tRNAs that read codons beginning with adenine. Is involved in the transfer of the threonylcarbamoyl moiety of threonylcarbamoyl-AMP (TC-AMP) to the N6 group of A37, together with TsaE and TsaB. TsaD likely plays a direct catalytic role in this reaction. The chain is tRNA N6-adenosine threonylcarbamoyltransferase from Pediococcus pentosaceus (strain ATCC 25745 / CCUG 21536 / LMG 10740 / 183-1w).